Reading from the N-terminus, the 65-residue chain is Toxin Cbi1 (65 aa).

Residues K1–R64 enclose the LCN-type CS-alpha/beta domain. Cystine bridges form between C11-C63, C15-C37, C22-C44, and C26-C46.

Belongs to the long (4 C-C) scorpion toxin superfamily. Sodium channel inhibitor family. Beta subfamily. In terms of tissue distribution, expressed by the venom gland.

The protein resides in the secreted. In terms of biological role, beta toxins bind voltage-independently at site-4 of sodium channels (Nav) and shift the voltage of activation toward more negative potentials thereby affecting sodium channel activation and promoting spontaneous and repetitive firing. This chain is Toxin Cbi1, found in Centruroides bicolor (Scorpion).